The primary structure comprises 464 residues: MGTIYLFRKTQRSLLGKLAQEFRLVTADRRSWKILLFGAINVVCTAFLLTWCSSTNSMALTAYTYLTIFDLFSLITSLISYWVTMKKPSPTYSFGFERFEVLAVFASTVLAQLGALFILKESAERFIEQPEIHTGRLLVGTFVALFFNLFTMLSIRNKPFAYVSDAASTSWLQEHVADLSRSLCGIIPGLSSIFLPRMNPFVLIDIAGALALCITYMLIEINNYFAVDTASAVAIAVMTFGTMYPMSVYSGKVLLQTTPPHVIGQLDKLLREVSTLDGVLEVRNEHFWTLGFGTMAGSVHVRIRRDANEQMVLAHVTNRLSTLVSTLTVQIFKDDWARPVLASGTMPPNMLNIPEHHVIQMPSLKSTIDELNPLTSTPSKPSSPPPEFAFNTPGKNMNPVILSNNQMRPFGVGYNYGTTPYTTTFNQGLGVPGVGNTQGLRTGLTNVANRYGTYTPGQFTQFRQ.

Over 1–33 the chain is Cytoplasmic; sequence MGTIYLFRKTQRSLLGKLAQEFRLVTADRRSWK. A helical transmembrane segment spans residues 34-54; the sequence is ILLFGAINVVCTAFLLTWCSS. The Extracellular portion of the chain corresponds to 55 to 64; the sequence is TNSMALTAYT. Residues 65–85 traverse the membrane as a helical segment; it reads YLTIFDLFSLITSLISYWVTM. Topologically, residues 86 to 98 are cytoplasmic; that stretch reads KKPSPTYSFGFER. The chain crosses the membrane as a helical span at residues 99–119; the sequence is FEVLAVFASTVLAQLGALFIL. The Extracellular portion of the chain corresponds to 120 to 134; sequence KESAERFIEQPEIHT. Residues 135 to 155 form a helical membrane-spanning segment; it reads GRLLVGTFVALFFNLFTMLSI. At 156-200 the chain is on the cytoplasmic side; that stretch reads RNKPFAYVSDAASTSWLQEHVADLSRSLCGIIPGLSSIFLPRMNP. The helical transmembrane segment at 201 to 221 threads the bilayer; the sequence is FVLIDIAGALALCITYMLIEI. Over 222-223 the chain is Extracellular; sequence NN. The helical transmembrane segment at 224 to 244 threads the bilayer; that stretch reads YFAVDTASAVAIAVMTFGTMY. The Cytoplasmic portion of the chain corresponds to 245–464; that stretch reads PMSVYSGKVL…TPGQFTQFRQ (220 aa).

This sequence belongs to the cation diffusion facilitator (CDF) transporter (TC 2.A.4) family. SLC30A subfamily. As to quaternary structure, heterodimer with SLC30A5; form a functional zinc ion transmembrane transporter.

It is found in the golgi apparatus. Its subcellular location is the trans-Golgi network membrane. Its function is as follows. Has probably no intrinsic transporter activity but together with SLC30A5 forms a functional zinc ion:proton antiporter heterodimer, mediating zinc entry into the lumen of organelles along the secretory pathway. As part of that zinc ion:proton antiporter, contributes to zinc ion homeostasis within the early secretory pathway and regulates the activation and folding of enzymes like alkaline phosphatases and enzymes involved in phosphatidylinositol glycan anchor biosynthesis. This Xenopus laevis (African clawed frog) protein is Zinc transporter 6-A (slc30a6-a).